Consider the following 395-residue polypeptide: Synaptotagmin-8 (395 aa).

Over 1–44 (MQADRSMKMGHALNPFSTSAPLDATAGPSLIPDLITRIPWPRWT) the chain is Extracellular. Residues 45-65 (LFIAILAAGVLLVSCLLCVIC) traverse the membrane as a helical; Signal-anchor for type III membrane protein segment. The Cytoplasmic segment spans residues 66 to 395 (CYCHRHRHRK…PRLPLLRPRS (330 aa)). C2 domains follow at residues 113 to 229 (QWGR…ESWY) and 241 to 370 (QMGE…AQWH).

This sequence belongs to the synaptotagmin family. Homodimer or homooligomer. Homodimerization and homooligomerization do not depend on Ca(2+). Interacts with SYNCRIP isoform 2 C-terminus. Binds inositol 1,3,4,5-tetrakisphosphate (IP4). Binds to AP2 in a Ca(2+)-independent manner. Interacts with STX1A, STX1B and STX2; the interaction is Ca(2+)-dependent. As to expression, ubiquitous. Detected in testis and brain. Expressed in primary neurons, neuroendocrine and endocrine cells.

It is found in the cytoplasm. The protein resides in the cell membrane. The protein localises to the cytoplasmic vesicle. Its subcellular location is the secretory vesicle. It localises to the acrosome. Involved in the trafficking and exocytosis of secretory vesicles in non-neuronal tissues. Mediates Ca(2+)-regulation of exocytosis acrosomal reaction in sperm. May mediate Ca(2+)-regulation of exocytosis in insulin secreted cells. The sequence is that of Synaptotagmin-8 (Syt8) from Mus musculus (Mouse).